Here is a 244-residue protein sequence, read N- to C-terminus: Large ribosomal subunit protein uL2 (244 aa).

Composition is skewed to basic residues over residues 1–12 and 234–244; these read MGKRPLVRRRGR and KTGRARIKERK. 2 disordered regions span residues 1-30 and 203-244; these read MGKR…TKAN and HGGG…KERK.

Belongs to the universal ribosomal protein uL2 family. As to quaternary structure, part of the 50S ribosomal subunit. Forms a bridge to the 30S subunit in the 70S ribosome.

Its function is as follows. One of the primary rRNA binding proteins. Required for association of the 30S and 50S subunits to form the 70S ribosome, for tRNA binding and peptide bond formation. It has been suggested to have peptidyltransferase activity; this is somewhat controversial. Makes several contacts with the 16S rRNA in the 70S ribosome. This Nitrosopumilus maritimus (strain SCM1) protein is Large ribosomal subunit protein uL2.